The chain runs to 306 residues: Recombination-associated protein RdgC (306 aa).

The protein belongs to the RdgC family.

Its subcellular location is the cytoplasm. The protein resides in the nucleoid. May be involved in recombination. The chain is Recombination-associated protein RdgC from Pseudomonas fluorescens (strain Pf0-1).